Here is a 304-residue protein sequence, read N- to C-terminus: GS homeobox 2 (304 aa).

Positions 116–151 (AQFCPRVNHAHHHHHPPQHHHHHHQPQQPGSAAAAA) are disordered. Over residues 123-140 (NHAHHHHHPPQHHHHHHQ) the composition is skewed to basic residues. Residues 141 to 151 (PQQPGSAAAAA) show a composition bias toward low complexity. A DNA-binding region (homeobox) is located at residues 202–261 (GKRMRTAFTSTQLLELEREFSSNMYLSRLRRIEIATYLNLSEKQVKIWFQNRRVKHKKEG). Positions 283-304 (RSEDEDSLSPASANDDKEISPL) are disordered.

It belongs to the Antp homeobox family.

The protein localises to the nucleus. It localises to the cytoplasm. Transcription factor that binds 5'-CNAATTAG-3' DNA sequence and regulates the expression of numerous genes including genes important for brain development. During telencephalic development, causes ventralization of pallial progenitors and, depending on the developmental stage, specifies different neuronal fates. At early stages, necessary and sufficient to correctly specify the ventral lateral ganglionic eminence (LGE) and its major derivatives, the striatal projection neurons. At later stages, may specify LGE progenitors toward dorsal LGE fates, including olfactory bulb interneurons. This Homo sapiens (Human) protein is GS homeobox 2 (GSX2).